The following is a 419-amino-acid chain: Hyaluronan synthase (419 aa).

5 helical membrane passes run 8-28 (LIVL…MYLF), 33-53 (VGIY…LSFL), 318-338 (IVAL…VAIG), 345-365 (AIQL…IVAL), and 376-396 (PASF…LQPL).

Belongs to the NodC/HAS family. Mg(2+) is required as a cofactor.

The protein localises to the cell membrane. The enzyme catalyses [hyaluronan](n) + UDP-N-acetyl-alpha-D-glucosamine = N-acetyl-beta-D-glucosaminyl-(1-&gt;4)-[hyaluronan](n) + UDP + H(+). It carries out the reaction N-acetyl-beta-D-glucosaminyl-(1-&gt;4)-[hyaluronan](n) + UDP-alpha-D-glucuronate = [hyaluronan](n+1) + UDP + H(+). Its pathway is glycan biosynthesis; hyaluronan biosynthesis. Glycosaminoglycan synthesis. The hyaluronic acid capsule is involved in the pathogenicity of group A Streptococci; it may be the major virulence determinant. This chain is Hyaluronan synthase (hasA), found in Streptococcus pyogenes serotype M1.